The following is a 313-amino-acid chain: Olfactory receptor 2B6 (313 aa).

Topologically, residues 1 to 25 are extracellular; it reads MNWVNDSIIQEFILLGFSDRPWLEF. Asn5 carries an N-linked (GlcNAc...) asparagine glycan. Residues 26–49 form a helical membrane-spanning segment; that stretch reads PLLVVFLISYTVTIFGNLTIILVS. Residues 50–57 lie on the Cytoplasmic side of the membrane; the sequence is RLDTKLHT. Residues 58-79 form a helical membrane-spanning segment; the sequence is PMYFFLTNLSLLDLCYTTCTVP. The Extracellular segment spans residues 80–100; the sequence is QMLVNLCSIRKVISYRGCVAQ. An intrachain disulfide couples Cys97 to Cys189. Residues 101–120 form a helical membrane-spanning segment; that stretch reads LFIFLALGATEYLLLAVMSF. Residues 121–139 lie on the Cytoplasmic side of the membrane; the sequence is DRFVAICRPLHYSVIMHQR. A helical membrane pass occupies residues 140–158; it reads LCLQLAAASWVTGFSNSVW. Residues 159–195 are Extracellular-facing; the sequence is LSTLTLQLPLCDPYVIDHFLCEVPALLKLSCVETTAN. A helical transmembrane segment spans residues 196 to 219; sequence EAELFLVSELFHLIPLTLILISYA. At 220–236 the chain is on the cytoplasmic side; that stretch reads FIVRAVLRIQSAEGRQK. A helical membrane pass occupies residues 237–259; it reads AFGTCGSHLIVVSLFYSTAVSVY. Topologically, residues 260–272 are extracellular; the sequence is LQPPSPSSKDQGK. The helical transmembrane segment at 273–292 threads the bilayer; it reads MVSLFYGIIAPMLNPLIYTL. The Cytoplasmic portion of the chain corresponds to 293 to 313; that stretch reads RNKEVKEGFKRLVARVFLIKK.

The protein belongs to the G-protein coupled receptor 1 family.

Its subcellular location is the cell membrane. Its function is as follows. Odorant receptor. This is Olfactory receptor 2B6 from Homo sapiens (Human).